The following is a 78-amino-acid chain: Small ribosomal subunit protein bS18 (78 aa).

Belongs to the bacterial ribosomal protein bS18 family. In terms of assembly, part of the 30S ribosomal subunit. Forms a tight heterodimer with protein bS6.

Functionally, binds as a heterodimer with protein bS6 to the central domain of the 16S rRNA, where it helps stabilize the platform of the 30S subunit. The protein is Small ribosomal subunit protein bS18 of Alkaliphilus oremlandii (strain OhILAs) (Clostridium oremlandii (strain OhILAs)).